Reading from the N-terminus, the 116-residue chain is Small ribosomal subunit protein uS13 (116 aa).

The disordered stretch occupies residues 92–116 (RRGLPVRGQNTKNNARTRKGAKRSR). A compositionally biased stretch (basic residues) spans 106-116 (ARTRKGAKRSR).

Belongs to the universal ribosomal protein uS13 family. In terms of assembly, part of the 30S ribosomal subunit. Forms a loose heterodimer with protein S19. Forms two bridges to the 50S subunit in the 70S ribosome.

In terms of biological role, located at the top of the head of the 30S subunit, it contacts several helices of the 16S rRNA. In the 70S ribosome it contacts the 23S rRNA (bridge B1a) and protein L5 of the 50S subunit (bridge B1b), connecting the 2 subunits; these bridges are implicated in subunit movement. Contacts the tRNAs in the A and P-sites. In Lactobacillus delbrueckii subsp. bulgaricus (strain ATCC 11842 / DSM 20081 / BCRC 10696 / JCM 1002 / NBRC 13953 / NCIMB 11778 / NCTC 12712 / WDCM 00102 / Lb 14), this protein is Small ribosomal subunit protein uS13.